Here is a 254-residue protein sequence, read N- to C-terminus: Fasciclin-like arabinogalactan protein 7 (254 aa).

The first 22 residues, 1 to 22 (MAKMQLSIFIAVVALIVCSASA), serve as a signal peptide directing secretion. Positions 44–186 (NVNLTELLSV…VAVYQVNRVL (143 aa)) constitute an FAS1 domain. Asparagine 46, asparagine 78, asparagine 104, and asparagine 130 each carry an N-linked (GlcNAc...) asparagine glycan. A disordered region spans residues 203-233 (APAPIVSAPSDSPSVADSEGASSPKSSHKNS). A compositionally biased stretch (low complexity) spans 206–220 (PIVSAPSDSPSVADS). Positions 222–233 (GASSPKSSHKNS) are enriched in polar residues. Asparagine 232 carries GPI-anchor amidated asparagine lipidation. Residues 233–254 (SGQKLLLAPISMVISGLVALFL) constitute a propeptide, removed in mature form.

It belongs to the fasciclin-like AGP family.

It is found in the cell membrane. Its function is as follows. May be a cell surface adhesion protein. This is Fasciclin-like arabinogalactan protein 7 (FLA7) from Arabidopsis thaliana (Mouse-ear cress).